We begin with the raw amino-acid sequence, 152 residues long: Transcriptional regulator MraZ (152 aa).

2 consecutive SpoVT-AbrB domains span residues 5 to 52 (ANAI…PLPE) and 81 to 124 (ATEG…DHSV).

It belongs to the MraZ family. As to quaternary structure, forms oligomers.

The protein resides in the cytoplasm. It localises to the nucleoid. The polypeptide is Transcriptional regulator MraZ (Pseudoalteromonas atlantica (strain T6c / ATCC BAA-1087)).